The chain runs to 154 residues: Insulin-like peptide 1 (154 aa).

Positions 1–29 are cleaved as a signal peptide; the sequence is MFSQHNGAAVHGLRLQSLLIAAMLTAAMA. Disulfide bonds link Cys-49–Cys-138, Cys-61–Cys-151, and Cys-137–Cys-142. A disordered region spans residues 72-92; sequence RESLLGNSDDDEDTEQEVQDD. Positions 73 to 122 are cleaved as a propeptide — connecting peptide; the sequence is ESLLGNSDDDEDTEQEVQDDSSMWQTLDGAGYSFSPLLTNLYGSEVLIKM. Residues 79–91 show a composition bias toward acidic residues; sequence SDDDEDTEQEVQD.

Belongs to the insulin family. In terms of assembly, heterodimer of a B chain and an A chain linked by two disulfide bonds.

The protein resides in the secreted. Possible ligand of InR/insulin-like receptor. This is Insulin-like peptide 1 from Drosophila melanogaster (Fruit fly).